A 129-amino-acid polypeptide reads, in one-letter code: Probable protein cornichon homolog 2 (129 aa).

The next 2 helical transmembrane spans lie at 45 to 65 (FIVQGVLCVFYLLTGHWFMTL) and 105 to 125 (LAYIVLNLFLTIFWMIYSALD).

The protein belongs to the cornichon family.

It localises to the membrane. In Arabidopsis thaliana (Mouse-ear cress), this protein is Probable protein cornichon homolog 2.